Consider the following 73-residue polypeptide: Homeodomain-only protein (73 aa).

Residues 3–62 constitute a DNA-binding region (homeobox; degenerate); the sequence is TETASGPTEDQVEILEYNFNKVNKHPDPTTLCLIAAEAGLSEEETQKWFKQRLAQWRRSE.

Interacts with serum response factor (SRF). Component of a large complex containing histone deacetylases such as HDAC2. Interacts with the acetylated forms of HSPA1A and HSPA1B. Interacts with HSPA8.

Its subcellular location is the nucleus. The protein localises to the cytoplasm. Functionally, atypical homeodomain protein which does not bind DNA and is required to modulate cardiac growth and development. Acts via its interaction with SRF, thereby modulating the expression of SRF-dependent cardiac-specific genes and cardiac development. Prevents SRF-dependent transcription either by inhibiting SRF binding to DNA or by recruiting histone deacetylase (HDAC) proteins that prevent transcription by SRF. Overexpression causes cardiac hypertrophy. Acts as a co-chaperone for HSPA1A and HSPA1B chaperone proteins and assists in chaperone-mediated protein refolding. This is Homeodomain-only protein (HOPX) from Bos taurus (Bovine).